Reading from the N-terminus, the 906-residue chain is Aconitate hydratase A (906 aa).

Residues 1–2 (MS) constitute a propeptide that is removed on maturation. The [4Fe-4S] cluster site is built by cysteine 441, cysteine 507, and cysteine 510.

Belongs to the aconitase/IPM isomerase family. Monomer. [4Fe-4S] cluster serves as cofactor.

It catalyses the reaction citrate = D-threo-isocitrate. The catalysed reaction is (2S,3R)-3-hydroxybutane-1,2,3-tricarboxylate = 2-methyl-cis-aconitate + H2O. Its pathway is carbohydrate metabolism; tricarboxylic acid cycle; isocitrate from oxaloacetate: step 2/2. It functions in the pathway organic acid metabolism; propanoate degradation. Involved in the catabolism of short chain fatty acids (SCFA) via the tricarboxylic acid (TCA)(acetyl degradation route) and probably the 2-methylcitrate cycle I (propionate degradation route). Catalyzes the reversible isomerization of citrate to isocitrate via cis-aconitate. Could catalyze the hydration of 2-methyl-cis-aconitate to yield (2R,3S)-2-methylisocitrate. The apo form of AcnA functions as a RNA-binding regulatory protein. This is Aconitate hydratase A (acn) from Deinococcus radiodurans (strain ATCC 13939 / DSM 20539 / JCM 16871 / CCUG 27074 / LMG 4051 / NBRC 15346 / NCIMB 9279 / VKM B-1422 / R1).